Consider the following 560-residue polypeptide: Dihydroxy-acid dehydratase (560 aa).

Asp-80 provides a ligand contact to Mg(2+). Cys-121 contributes to the [2Fe-2S] cluster binding site. Mg(2+) is bound by residues Asp-122 and Lys-123. N6-carboxylysine is present on Lys-123. Position 194 (Cys-194) interacts with [2Fe-2S] cluster. A Mg(2+)-binding site is contributed by Glu-447. Ser-473 (proton acceptor) is an active-site residue.

This sequence belongs to the IlvD/Edd family. As to quaternary structure, homodimer. The cofactor is [2Fe-2S] cluster. It depends on Mg(2+) as a cofactor.

The enzyme catalyses (2R)-2,3-dihydroxy-3-methylbutanoate = 3-methyl-2-oxobutanoate + H2O. It catalyses the reaction (2R,3R)-2,3-dihydroxy-3-methylpentanoate = (S)-3-methyl-2-oxopentanoate + H2O. The protein operates within amino-acid biosynthesis; L-isoleucine biosynthesis; L-isoleucine from 2-oxobutanoate: step 3/4. It functions in the pathway amino-acid biosynthesis; L-valine biosynthesis; L-valine from pyruvate: step 3/4. Functionally, functions in the biosynthesis of branched-chain amino acids. Catalyzes the dehydration of (2R,3R)-2,3-dihydroxy-3-methylpentanoate (2,3-dihydroxy-3-methylvalerate) into 2-oxo-3-methylpentanoate (2-oxo-3-methylvalerate) and of (2R)-2,3-dihydroxy-3-methylbutanoate (2,3-dihydroxyisovalerate) into 2-oxo-3-methylbutanoate (2-oxoisovalerate), the penultimate precursor to L-isoleucine and L-valine, respectively. In Chlorobaculum tepidum (strain ATCC 49652 / DSM 12025 / NBRC 103806 / TLS) (Chlorobium tepidum), this protein is Dihydroxy-acid dehydratase.